The primary structure comprises 340 residues: Putative cystathionine beta-lyase (340 aa).

The residue at position 208 (Lys208) is an N6-(pyridoxal phosphate)lysine.

The protein belongs to the trans-sulfuration enzymes family. Pyridoxal 5'-phosphate is required as a cofactor.

It carries out the reaction L,L-cystathionine + H2O = L-homocysteine + pyruvate + NH4(+). It catalyses the reaction an S-substituted L-cysteine + H2O = a thiol + pyruvate + NH4(+). The protein operates within amino-acid biosynthesis; L-methionine biosynthesis via de novo pathway; L-homocysteine from L-cystathionine: step 1/1. The polypeptide is Putative cystathionine beta-lyase (IRC7) (Saccharomyces cerevisiae (strain ATCC 204508 / S288c) (Baker's yeast)).